Reading from the N-terminus, the 292-residue chain is Nucleotide-binding protein SACE_2139 (292 aa).

Position 15–22 (glycine 15–serine 22) interacts with ATP. GTP is bound at residue aspartate 66–serine 69.

The protein belongs to the RapZ-like family.

Functionally, displays ATPase and GTPase activities. This is Nucleotide-binding protein SACE_2139 from Saccharopolyspora erythraea (strain ATCC 11635 / DSM 40517 / JCM 4748 / NBRC 13426 / NCIMB 8594 / NRRL 2338).